Reading from the N-terminus, the 739-residue chain is Adenosylcobalamin-dependent ribonucleoside-triphosphate reductase (739 aa).

An intrachain disulfide couples C119 to C419. An effector region-1 region spans residues 147-158 (SMPFSFLFDELM). An effector region-2 region spans residues 168–313 (ARSNISQIPR…ICNLIGKAVV (146 aa)). Residues C408 and E410 contribute to the active site. The segment at 565–626 (FHYGAYLIQR…NPNFASAGTV (62 aa)) is adenosylcobalamin-binding-1. The segment at 685 to 724 (LQQAPKEPIDKETYEKRSQEITGNVEEVFSQLNSDVKDLE) is adenosylcobalamin-binding-2.

It belongs to the class II ribonucleoside-triphosphate reductase family. As to quaternary structure, monomer. The cofactor is adenosylcob(III)alamin.

The catalysed reaction is a 2'-deoxyribonucleoside 5'-triphosphate + [thioredoxin]-disulfide + H2O = a ribonucleoside 5'-triphosphate + [thioredoxin]-dithiol. With respect to regulation, allosterically regulated by ATP and dNTP. The polypeptide is Adenosylcobalamin-dependent ribonucleoside-triphosphate reductase (rtpR) (Lactobacillus delbrueckii subsp. bulgaricus (strain ATCC BAA-365 / Lb-18)).